A 240-amino-acid polypeptide reads, in one-letter code: Ribosomal RNA small subunit methyltransferase G (240 aa).

S-adenosyl-L-methionine is bound by residues Gly80, Phe85, 103–105 (DSS), 131–132 (AE), and Arg150.

The protein belongs to the methyltransferase superfamily. RNA methyltransferase RsmG family.

The protein localises to the cytoplasm. In terms of biological role, specifically methylates the N7 position of a guanine in 16S rRNA. This Thermoanaerobacter pseudethanolicus (strain ATCC 33223 / 39E) (Clostridium thermohydrosulfuricum) protein is Ribosomal RNA small subunit methyltransferase G.